Reading from the N-terminus, the 1170-residue chain is Thrombospondin-1 (1170 aa).

The N-terminal stretch at 1–18 is a signal peptide; the sequence is MGLAWGLGVLFLMHVCGT. The interval 47–95 is heparin-binding; that stretch reads RLVKGPDPSSPAFRIEDANLIPPVPDDKFQDLVDAVRAEKGFLLLASLR. In terms of domain architecture, Laminin G-like spans 65-270; that stretch reads NLIPPVPDDK…HKTKDLQAIC (206 aa). C171 and C232 form a disulfide bridge. N248 and N360 each carry an N-linked (GlcNAc...) asparagine glycan. The VWFC domain maps to 316 to 373; sequence PLCYHNGVQYRNNEEWTVDSCTECHCQNSVTICKKVSCPIMPCSNATVPDGECCPRCW. TSP type-1 domains lie at 379–429, 435–490, and 492–547; these read DDGW…QECD, DGGW…DACP, and NGGW…QDCP. W385 carries a C-linked (Man) tryptophan glycan. Disulfide bonds link C391-C423, C395-C428, and C406-C413. An O-linked (Fuc...) serine glycan is attached at S394. C-linked (Man) tryptophan glycosylation is found at W438 and W441. Intrachain disulfides connect C447–C484, C451–C489, and C462–C474. An O-linked (Fuc...) threonine glycan is attached at T450. C-linked (Man) tryptophan glycosylation is present at W498. 21 cysteine pairs are disulfide-bonded: C504–C541, C508–C546, C519–C531, C551–C562, C556–C572, C575–C586, C592–C608, C599–C617, C620–C644, C650–C663, C657–C676, C678–C689, C705–C713, C718–C738, C754–C774, C777–C797, C813–C833, C836–C856, C874–C894, C910–C930, and C946–C1167. An O-linked (Fuc...) threonine glycan is attached at T507. The interval 531-1152 is involved in retention in extracellular matrix (ECM); involved in trimer formation; sequence CVGDVTENQI…YAGGRLGLFV (622 aa). Residues 547-587 form the EGF-like 1 domain; sequence PIDGCLSNPCFAGVKCTSYPDGSWKCGACPPGYSGNGIQCT. Residue S553 is glycosylated (O-linked (Xyl) serine). In terms of domain architecture, EGF-like 2 spans 646-690; sequence PRNPCTDGTHDCNKNAKCNYLGHYSDPMYRCECKPGYAGNGIICG. TSP type-3 repeat units lie at residues 691–726, 727–762, 763–785, 786–821, 822–844, 845–882, 883–918, and 919–954; these read EDTD…NSGQ, EDYD…NPAQ, YDYD…NPDQ, ADTD…NVDQ, RDTD…NPDQ, LDSD…NANQ, ADHD…NPDQ, and KDSD…DISE. N708 carries an N-linked (GlcNAc...) asparagine glycan. The tract at residues 839–934 is disordered; it reads EHNPDQLDSD…GRGDACKDDF (96 aa). 3 stretches are compositionally biased toward basic and acidic residues: residues 840–854, 883–894, and 917–934; these read HNPD…RIGD, ADHDKDGKGDAC, and DQKD…KDDF. The short motif at 926-928 is the Cell attachment site element; it reads RGD. Positions 958–1170 constitute a TSP C-terminal domain; that stretch reads RRFQMIPLDP…SDLKYECRDP (213 aa). N-linked (GlcNAc...) asparagine glycosylation is present at N1067.

It belongs to the thrombospondin family. As to quaternary structure, homotrimer; disulfide-linked. Can bind to fibrinogen, fibronectin, laminin, type V collagen and integrins alpha-V/beta-1, alpha-V/beta-3 and alpha-IIb/beta-3. Binds heparin. Interacts (via the C-terminal domain) with CD47. Interacts (via the TSP type I repeats) with CD36; the interaction conveys an antiangiogenic effect. Interacts (via the TSP type I repeats) with HRG; the interaction blocks the antiangiogenic effect of THBS1 with CD36. Interacts with ATF6 (via lumenal domain). Interacts with FN1; this interaction is enhanced by TNFAIP6, which may act as a bridging molecule between FN1 and THBS1. Interacts with SIRPA; the interaction stimulates phosphorylation of SIRPA. Expressed by platelets (at protein level). Expressed by monocyte-derived immature and mature dendritic cells (at protein level).

The protein localises to the secreted. It is found in the cell surface. It localises to the extracellular space. The protein resides in the extracellular matrix. Its subcellular location is the endoplasmic reticulum. The protein localises to the sarcoplasmic reticulum. Functionally, adhesive glycoprotein that mediates cell-to-cell and cell-to-matrix interactions. Multifunctional, involved in inflammation, angiogenesis, wound healing, reactive oxygen species (ROS) signaling, nitrous oxide (NO) signaling, apoptosis, senescence, aging, cellular self-renewal, stemness, and cardiovascular and metabolic homeostasis. Negatively modulates dendritic cell activation and cytokine release, as part of an autocrine feedback loop, contributing to the resolution of inflammation and immune homeostasis. Ligand for receptor CD47. Modulates nitrous oxide (NO) signaling via CD47, hence playing a role as a pressor agent, supporting blood pressure. Plays a role in endothelial cell senescence, acting via CD47, by increasing the abundance and activation of NADPH oxidase NOX1, and so generating excess ROS. Inhibits stem cell self-renewal, acting via CD47 signaling, probably by regulation of the stem cell transcription factors POU5F1/OCT4, SOX2, MYC/c-Myc and KLF4. Negatively modulates wound healing, acting via CD47. Ligand for receptor CD36. Involved in inducing apoptosis in podocytes in response to elevated free fatty acids, acting via CD36. Plays a role in suppressing angiogenesis, acting, depending on context, via CD36 or CD47. Promotes cellular senescence in a TP53-CDKN1A-RB1 signaling-dependent manner. Ligand for immunoglobulin-like cell surface receptor SIRPA. Involved in ROS signaling in non-phagocytic cells, stimulating NADPH oxidase-derived ROS production, acting via interaction with SIRPA. Plays a role in metabolic dysfunction in diet-induced obesity, perhaps acting by exacerbating adipose inflammatory activity; its effects may be mediated, at least in part, through enhanced adipocyte proliferation. Plays a role in ER stress response, via its interaction with the activating transcription factor 6 alpha (ATF6) which produces adaptive ER stress response factors. May be involved in age-related conditions, including metabolic dysregulation, during normal aging. This chain is Thrombospondin-1, found in Homo sapiens (Human).